We begin with the raw amino-acid sequence, 242 residues long: Biosynthetic peptidoglycan transglycosylase (242 aa).

Residues 18-38 (VIMAVLCIAILYQLWMFSLVV) form a helical membrane-spanning segment.

The protein belongs to the glycosyltransferase 51 family.

Its subcellular location is the cell inner membrane. It carries out the reaction [GlcNAc-(1-&gt;4)-Mur2Ac(oyl-L-Ala-gamma-D-Glu-L-Lys-D-Ala-D-Ala)](n)-di-trans,octa-cis-undecaprenyl diphosphate + beta-D-GlcNAc-(1-&gt;4)-Mur2Ac(oyl-L-Ala-gamma-D-Glu-L-Lys-D-Ala-D-Ala)-di-trans,octa-cis-undecaprenyl diphosphate = [GlcNAc-(1-&gt;4)-Mur2Ac(oyl-L-Ala-gamma-D-Glu-L-Lys-D-Ala-D-Ala)](n+1)-di-trans,octa-cis-undecaprenyl diphosphate + di-trans,octa-cis-undecaprenyl diphosphate + H(+). It participates in cell wall biogenesis; peptidoglycan biosynthesis. Peptidoglycan polymerase that catalyzes glycan chain elongation from lipid-linked precursors. The sequence is that of Biosynthetic peptidoglycan transglycosylase from Bordetella bronchiseptica (strain ATCC BAA-588 / NCTC 13252 / RB50) (Alcaligenes bronchisepticus).